Consider the following 328-residue polypeptide: Transcription initiation factor IIE subunit beta (328 aa).

The tract at residues 32–105 (QKKTNDTVIT…SSPSKKVRPG (74 aa)) is disordered. Ser-52 bears the Phosphoserine mark. Over residues 85–94 (LDDDDDDEDF) the composition is skewed to acidic residues. Ser-97 and Ser-106 each carry phosphoserine. The TFIIE beta DNA-binding region spans 113–187 (QANQTDISKS…FKYLSTYDVH (75 aa)).

Belongs to the TFIIE beta subunit family. As to quaternary structure, TFIIE is a tetramer of two alpha (TFA1) and two beta (TFA2) subunits.

The protein resides in the nucleus. Its function is as follows. Recruits TFIIH to the initiation complex and stimulates the RNA polymerase II C-terminal domain kinase and DNA-dependent ATPase activities of TFIIH. Both TFIIH and TFIIE are required for promoter clearance by RNA polymerase. The chain is Transcription initiation factor IIE subunit beta (TFA2) from Saccharomyces cerevisiae (strain ATCC 204508 / S288c) (Baker's yeast).